We begin with the raw amino-acid sequence, 360 residues long: Histidinol-phosphate aminotransferase (360 aa).

At Lys221 the chain carries N6-(pyridoxal phosphate)lysine.

The protein belongs to the class-II pyridoxal-phosphate-dependent aminotransferase family. Histidinol-phosphate aminotransferase subfamily. Homodimer. It depends on pyridoxal 5'-phosphate as a cofactor.

It carries out the reaction L-histidinol phosphate + 2-oxoglutarate = 3-(imidazol-4-yl)-2-oxopropyl phosphate + L-glutamate. Its pathway is amino-acid biosynthesis; L-histidine biosynthesis; L-histidine from 5-phospho-alpha-D-ribose 1-diphosphate: step 7/9. The sequence is that of Histidinol-phosphate aminotransferase from Desulfitobacterium hafniense (strain DSM 10664 / DCB-2).